The sequence spans 221 residues: Nuclear phosphoprotein UL3 homolog (221 aa).

It belongs to the alphaherpesvirinae HHV-1 UL3 family. In terms of processing, phosphorylated.

The protein localises to the host nucleus. The chain is Nuclear phosphoprotein UL3 homolog from Varicella-zoster virus (strain Dumas) (HHV-3).